The sequence spans 243 residues: Nuclear ubiquitous casein and cyclin-dependent kinase substrate 1 (243 aa).

Positions 1–243 (MSRPVRNRKV…SEDEAASGED (243 aa)) are disordered. Tyr-13 is subject to Phosphotyrosine. 2 positions are modified to phosphoserine: Ser-14 and Ser-19. A Phosphotyrosine modification is found at Tyr-26. Residues 35–51 (KKIRSSPREAKNKRRSG) are compositionally biased toward basic residues. Phosphoserine occurs at positions 54, 58, 61, 73, 75, and 79. Over residues 64–77 (KDVKTKKDDSHSAE) the composition is skewed to basic and acidic residues. Positions 91–100 (QQRQAASKAA) are enriched in low complexity. Over residues 111–124 (VGSEEEPEEDDEAP) the composition is skewed to acidic residues. Phosphoserine is present on residues Ser-113, Ser-130, Ser-132, and Ser-144. The span at 132–145 (SDEDFLMEDDDDSD) shows a compositional bias: acidic residues. Positions 149 to 174 (SKKKNKKMVKKSKPERKEKKMPKPRL) are enriched in basic residues. Position 179 is a phosphothreonine (Thr-179). Ser-181 carries the post-translational modification Phosphoserine. The span at 197–206 (TSKEKTPSPK) shows a compositional bias: basic and acidic residues. Position 202 is a phosphothreonine (Thr-202). Ser-204, Ser-214, Ser-223, Ser-229, Ser-234, and Ser-240 each carry phosphoserine. Residues 232-243 (EGSEDEAASGED) are compositionally biased toward acidic residues.

Does not interact with RAD51. In terms of processing, phosphorylated in an ATM-dependent manner in response to DNA damage. Phosphorylated by CDK1 and casein kinase.

It localises to the nucleus. Its subcellular location is the chromosome. Functionally, chromatin-associated protein involved in DNA repair by promoting homologous recombination (HR). Binds double-stranded DNA (dsDNA) and secondary DNA structures, such as D-loop structures, but with less affinity than RAD51AP1. This Rattus norvegicus (Rat) protein is Nuclear ubiquitous casein and cyclin-dependent kinase substrate 1.